Here is a 372-residue protein sequence, read N- to C-terminus: Ciliary neurotrophic factor receptor subunit alpha (372 aa).

Positions 1–22 (MAAPVPWACCAVLAAAAAVVYA) are cleaved as a signal peptide. Residues 27–104 (PQEAPHVQYE…WHLRHQVLLH (78 aa)) enclose the Ig-like C2-type domain. An intrachain disulfide couples C46 to C89. N-linked (GlcNAc...) asparagine glycosylation is found at N60, N70, N142, and N190. Fibronectin type-III domains are found at residues 108–205 (PPRE…VKPD) and 206–306 (PPEN…TEEP). A WSXWS motif motif is present at residues 290-294 (WSDWS). A disordered region spans residues 301–340 (PWTEEPRHLTTEAQAAETTTSTTSSLAPPPTTKICDPGEL). Over residues 311–326 (TEAQAAETTTSTTSSL) the composition is skewed to low complexity. S342 is lipidated: GPI-anchor amidated serine. A propeptide spans 343-372 (GGGPSAPFLVSVPITLALAAAAATASSLLI) (removed in mature form).

This sequence belongs to the type I cytokine receptor family. Type 3 subfamily. In terms of assembly, forms a heterotrimer with LIFR and IL6ST. Interacts with heterodimeric neurotropic cytokine composed of CLCF1/CLC and CRLF1/CLF-1. Either alone or in complex with the heterodimer CLCF1-CRLF1 interacts with SORL1; this interaction may promote internalization and lysosomal degradation. Component of a receptor complex composed of IL6ST/GP130, IL27RA/WSX1 and CNTFR which interacts with the neuroprotective peptide humanin. In terms of tissue distribution, nervous system and skeletal muscle.

The protein resides in the cell membrane. Binds to CNTF. The alpha subunit provides the receptor specificity. Receptor for heterodimeric neurotropic cytokine composed of CLCF1/CLC and CRLF1/CLF-1. Acts as a receptor for the neuroprotective peptide humanin as part of a complex with IL6ST/GP130 and IL27RA/WSX1. The chain is Ciliary neurotrophic factor receptor subunit alpha (CNTFR) from Homo sapiens (Human).